Consider the following 257-residue polypeptide: Neuroendocrine secretory protein 55 (257 aa).

A signal peptide spans 1–46 (MDRRSRAQQWRRARHNYNDLCPPIGRRAATALLWLSCSIALLRALA). A disordered region spans residues 61–257 (SFLNAHHRSA…RKGPIPIRRH (197 aa)). Low complexity predominate over residues 70 to 82 (AAAAAAAQVLPES). A compositionally biased stretch (basic and acidic residues) spans 86-103 (ESDHEHEEVEPELARPEC). Over residues 104–139 (LEYDQDDYETETDSETEPESDIESETEIETEPETEP) the composition is skewed to acidic residues. Basic and acidic residues predominate over residues 200 to 211 (EPQRGPLDQDPR). The segment covering 227–237 (PRRCKTRRPAR) has biased composition (basic residues).

It belongs to the NESP55 family. Post-translationally, binds keratan sulfate chains. May be proteolytically processed to give rise to a number of active peptides.

The protein localises to the cytoplasmic vesicle. Its subcellular location is the secretory vesicle. The protein resides in the secreted. The sequence is that of Neuroendocrine secretory protein 55 from Mus musculus (Mouse).